A 61-amino-acid chain; its full sequence is Large ribosomal subunit protein uL30 (61 aa).

It belongs to the universal ribosomal protein uL30 family. As to quaternary structure, part of the 50S ribosomal subunit.

This chain is Large ribosomal subunit protein uL30, found in Teredinibacter turnerae (strain ATCC 39867 / T7901).